Here is a 408-residue protein sequence, read N- to C-terminus: AA9 family lytic polysaccharide monooxygenase A (408 aa).

Positions 1–20 (MKTTTYSLLALAAASKLASA) are cleaved as a signal peptide. Cu(2+)-binding residues include histidine 21 and histidine 103. A disulfide bridge connects residues cysteine 63 and cysteine 186. N-linked (GlcNAc...) asparagine glycosylation is present at asparagine 151. Position 172 (histidine 172) interacts with O2. A Cu(2+)-binding site is contributed by tyrosine 183. Asparagine 331 and asparagine 381 each carry an N-linked (GlcNAc...) asparagine glycan. Positions 369-405 (GVAKQYERCGGINHTGPTTCESGSVCKKWNPYYYQCV) constitute a CBM1 domain.

It belongs to the polysaccharide monooxygenase AA9 family. It depends on Cu(2+) as a cofactor.

Its subcellular location is the secreted. It catalyses the reaction [(1-&gt;4)-beta-D-glucosyl]n+m + reduced acceptor + O2 = 4-dehydro-beta-D-glucosyl-[(1-&gt;4)-beta-D-glucosyl]n-1 + [(1-&gt;4)-beta-D-glucosyl]m + acceptor + H2O.. Lytic polysaccharide monooxygenase (LPMO) that depolymerizes crystalline and amorphous polysaccharides via the oxidation of scissile alpha- or beta-(1-4)-glycosidic bonds, yielding C4 oxidation products. Catalysis by LPMOs requires the reduction of the active-site copper from Cu(II) to Cu(I) by a reducing agent and H(2)O(2) or O(2) as a cosubstrate. This Aspergillus kawachii (strain NBRC 4308) (White koji mold) protein is AA9 family lytic polysaccharide monooxygenase A (eglD).